Consider the following 59-residue polypeptide: Large ribosomal subunit protein uL30 (59 aa).

The protein belongs to the universal ribosomal protein uL30 family. Part of the 50S ribosomal subunit.

The polypeptide is Large ribosomal subunit protein uL30 (Sulfurihydrogenibium sp. (strain YO3AOP1)).